The primary structure comprises 135 residues: Cytochrome b-c1 complex subunit 6, mitochondrial (135 aa).

The segment at 1–70 (MSFFRDLLES…ETADPLDTLR (70 aa)) is disordered. A compositionally biased stretch (acidic residues) spans 19–64 (EPVEDVEVEQPEDAPEEEVSEETVEEEEDDDEDDDEDDEEEEETAD).

Belongs to the UQCRH/QCR6 family. As to quaternary structure, component of the ubiquinol-cytochrome c oxidoreductase (cytochrome b-c1 complex, complex III, CIII), a multisubunit enzyme composed of 10 subunits. The complex is composed of 3 respiratory subunits cytochrome b (COB), cytochrome c1 (CYT1) and Rieske protein (RIP1), 2 core protein subunits COR1 and QCR2, and 5 low-molecular weight protein subunits QCR6, QCR7, QCR8, QCR9 and QCR10. The complex exists as an obligatory dimer and forms supercomplexes (SCs) in the inner mitochondrial membrane with a monomer or a dimer of cytochrome c oxidase (complex IV, CIV), resulting in 2 different assemblies (supercomplexes III(2)IV and III(2)IV(2)).

The protein resides in the mitochondrion inner membrane. In terms of biological role, component of the ubiquinol-cytochrome c oxidoreductase, a multisubunit transmembrane complex that is part of the mitochondrial electron transport chain which drives oxidative phosphorylation. The complex plays an important role in the uptake of multiple carbon sources present in different host niches. The sequence is that of Cytochrome b-c1 complex subunit 6, mitochondrial from Candida albicans (strain SC5314 / ATCC MYA-2876) (Yeast).